The primary structure comprises 76 residues: Protein krueppel (76 aa).

2 consecutive C2H2-type zinc fingers follow at residues 11-33 (FECS…LRLH) and 39-61 (YSCP…LRVH).

This sequence belongs to the krueppel C2H2-type zinc-finger protein family.

The protein resides in the nucleus. Krueppel is a gap class segmentation protein. The protein is Protein krueppel (Kr) of Manduca sexta (Tobacco hawkmoth).